The following is a 480-amino-acid chain: Protein nucleotidyltransferase YdiU (480 aa).

ATP is bound by residues Gly86, Gly88, Arg89, Lys109, Asp121, Gly122, Arg172, and Arg179. The active-site Proton acceptor is the Asp248. Mg(2+)-binding residues include Asn249 and Asp258. Asp258 provides a ligand contact to ATP.

This sequence belongs to the SELO family. Mg(2+) serves as cofactor. It depends on Mn(2+) as a cofactor.

The enzyme catalyses L-seryl-[protein] + ATP = 3-O-(5'-adenylyl)-L-seryl-[protein] + diphosphate. It carries out the reaction L-threonyl-[protein] + ATP = 3-O-(5'-adenylyl)-L-threonyl-[protein] + diphosphate. The catalysed reaction is L-tyrosyl-[protein] + ATP = O-(5'-adenylyl)-L-tyrosyl-[protein] + diphosphate. It catalyses the reaction L-histidyl-[protein] + UTP = N(tele)-(5'-uridylyl)-L-histidyl-[protein] + diphosphate. The enzyme catalyses L-seryl-[protein] + UTP = O-(5'-uridylyl)-L-seryl-[protein] + diphosphate. It carries out the reaction L-tyrosyl-[protein] + UTP = O-(5'-uridylyl)-L-tyrosyl-[protein] + diphosphate. In terms of biological role, nucleotidyltransferase involved in the post-translational modification of proteins. It can catalyze the addition of adenosine monophosphate (AMP) or uridine monophosphate (UMP) to a protein, resulting in modifications known as AMPylation and UMPylation. The chain is Protein nucleotidyltransferase YdiU from Salmonella paratyphi A (strain ATCC 9150 / SARB42).